The primary structure comprises 1107 residues: DNA polymerase delta catalytic subunit (1107 aa).

Residues methionine 1–phenylalanine 34 form a disordered region. The Nuclear localization signal signature appears at lysine 4–arginine 19. Arginine 19 is subject to Omega-N-methylarginine. Lysine 574 participates in a covalent cross-link: Glycyl lysine isopeptide (Lys-Gly) (interchain with G-Cter in SUMO2). Residues cysteine 1012, cysteine 1015, cysteine 1026, and cysteine 1029 each coordinate Zn(2+). A CysA-type zinc finger spans residues cysteine 1012–cysteine 1029. [4Fe-4S] cluster-binding residues include cysteine 1058, cysteine 1061, cysteine 1071, and cysteine 1076. Residues cysteine 1058 to cysteine 1076 carry the CysB motif motif.

This sequence belongs to the DNA polymerase type-B family. Component of the tetrameric DNA polymerase delta complex (Pol-delta4), which consists of POLD1/p125, POLD2/p50, POLD3/p66/p68 and POLD4/p12, with POLD1 bearing both DNA polymerase and 3' to 5' proofreading exonuclease activities. Within Pol-delta4, directly interacts with POLD2 and POLD4. Following genotoxic stress by DNA-damaging agents, such as ultraviolet light and methyl methanesulfonate, or by replication stress induced by treatment with hydroxyurea or aphidicolin, Pol-delta4 is converted into a trimeric form of the complex (Pol-delta3) by POLD4 degradation. Pol-delta3 is the major form at S phase replication sites and DNA damage sites. POLD1 displays different catalytic properties depending upon the complex it is found in. It exhibits higher proofreading activity and fidelity than Pol-delta4, making it particularly well suited to respond to DNA damage. Directly interacts with PCNA, as do POLD3 and POLD4; this interaction stimulates Pol-delta4 polymerase activity. As POLD2 and POLD4, directly interacts with WRNIP1; this interaction stimulates DNA polymerase delta-mediated DNA synthesis, independently of the presence of PCNA. This stimulation may be due predominantly to an increase of initiation frequency and also to increased processivity. Also observed as a dimeric complex with POLD2 (Pol-delta2 complex). Pol-delta2 is relatively insensitive to the PCNA stimulation (2-5-fold) compared to Pol-delta4 that is stimulated by over 50-fold. The DNA polymerase delta complex interacts with POLDIP2; this interaction is probably mediated through direct binding to POLD2. Interacts with CIAO1. Interacts with POLDIP2. Interacts with RFC1. It depends on [4Fe-4S] cluster as a cofactor. Widely expressed, with high levels of expression in heart and lung.

It is found in the nucleus. The enzyme catalyses DNA(n) + a 2'-deoxyribonucleoside 5'-triphosphate = DNA(n+1) + diphosphate. Its activity is regulated as follows. Regulated by alteration of quaternary structure. Exhibits burst rates of DNA synthesis are about 5 times faster in the presence of POLD4 (Pol-delta4 complex) than in its absence (Pol-delta3 complex), while the affinity of the enzyme for its DNA and dNTP substrates appears unchanged. The Pol-delta3 complex is more likely to proofread DNA synthesis because it cleaves single-stranded DNA twice as fast and transfers mismatched DNA from the polymerase to the exonuclease sites 9 times faster compared to the Pol-delta3 complex. Pol-delta3 also extends mismatched primers 3 times more slowly in the absence of POLD4. The conversion of Pol-delta4 into Pol-delta3 is induced by genotoxic stress or by replication stress leading POLD4 degradation. Stimulated in the presence of PCNA. This stimulation is further increased in the presence of KCTD13/PDIP1, most probably via direct interaction between KCTD13 and POLD2. In terms of biological role, as the catalytic component of the trimeric (Pol-delta3 complex) and tetrameric DNA polymerase delta complexes (Pol-delta4 complex), plays a crucial role in high fidelity genome replication, including in lagging strand synthesis, and repair. Exhibits both DNA polymerase and 3'- to 5'-exonuclease activities. Requires the presence of accessory proteins POLD2, POLD3 and POLD4 for full activity. Depending upon the absence (Pol-delta3) or the presence of POLD4 (Pol-delta4), displays differences in catalytic activity. Most notably, expresses higher proofreading activity in the context of Pol-delta3 compared with that of Pol-delta4. Although both Pol-delta3 and Pol-delta4 process Okazaki fragments in vitro, Pol-delta3 may be better suited to fulfill this task, exhibiting near-absence of strand displacement activity compared to Pol-delta4 and stalling on encounter with the 5'-blocking oligonucleotides. Pol-delta3 idling process may avoid the formation of a gap, while maintaining a nick that can be readily ligated. Along with DNA polymerase kappa, DNA polymerase delta carries out approximately half of nucleotide excision repair (NER) synthesis following UV irradiation. Under conditions of DNA replication stress, in the presence of POLD3 and POLD4, may catalyze the repair of broken replication forks through break-induced replication (BIR). Involved in the translesion synthesis (TLS) of templates carrying O6-methylguanine, 8oxoG or abasic sites. The protein is DNA polymerase delta catalytic subunit of Homo sapiens (Human).